Consider the following 198-residue polypeptide: MSISLLGRIVSQQFSGIRAAGPGRSLYLPFTLLLKQPGAYKVNLHRYVHSTQTKSHLSFLMNNNDITPFQKFTVKVLKEQCKSRGLKLSGRKSDLLQRLITHDSCSNKKSSVKINEPKKKRILINDPIKITKKLVSDKTFRTIEKNISSLQNTPVIETPCDVHSHLQPRDRIFLLGFFMLSCLWWNLEPQESKPTIDH.

The N-terminal 55 residues, 1–55 (MSISLLGRIVSQQFSGIRAAGPGRSLYLPFTLLLKQPGAYKVNLHRYVHSTQTKS), are a transit peptide targeting the mitochondrion. The SAP domain maps to 69-103 (FQKFTVKVLKEQCKSRGLKLSGRKSDLLQRLITHD). Residues 172–187 (IFLLGFFMLSCLWWNL) traverse the membrane as a helical segment.

This sequence belongs to the AIM34 family.

It is found in the mitochondrion membrane. This Saccharomyces cerevisiae (strain RM11-1a) (Baker's yeast) protein is Altered inheritance of mitochondria protein 34, mitochondrial (AIM34).